The chain runs to 459 residues: Probable ECA polymerase (459 aa).

Transmembrane regions (helical) follow at residues 3–23 (LTQF…ILTL), 37–57 (IFFS…TCLL), 65–85 (VVPV…YGIY), 119–139 (LASV…FLLF), 154–174 (GVAL…VYFL), 181–201 (WLFF…VVGG), 206–226 (IIIA…ITLW), 227–247 (MLVT…LKRY), 340–360 (LVVM…GLII), 377–397 (YKAA…IVLA), and 409–429 (VFFC…YWLF).

The protein belongs to the WzyE family. As to quaternary structure, probably part of a complex composed of WzxE, WzyE and WzzE.

It localises to the cell inner membrane. It functions in the pathway bacterial outer membrane biogenesis; enterobacterial common antigen biosynthesis. Its function is as follows. Probably involved in the polymerization of enterobacterial common antigen (ECA) trisaccharide repeat units. In Photorhabdus laumondii subsp. laumondii (strain DSM 15139 / CIP 105565 / TT01) (Photorhabdus luminescens subsp. laumondii), this protein is Probable ECA polymerase.